Reading from the N-terminus, the 160-residue chain is MRILGIDPGLARVGYGVIDVEPRKGKQEGSQRMIDCGIIRTDPGRSEGERMVEIARDLRQIIRIHQPELASVEKFFFYRSSNTIAVVQARGVLIMTLARFGLPIVEFPPMQIKQALTGHGHADKDEVLEAVMRELNLDTPPRPDDAADALAVALTGWFQH.

Catalysis depends on residues Asp-7, Glu-73, and Asp-145. Residues Asp-7, Glu-73, and Asp-145 each coordinate Mg(2+).

This sequence belongs to the RuvC family. As to quaternary structure, homodimer which binds Holliday junction (HJ) DNA. The HJ becomes 2-fold symmetrical on binding to RuvC with unstacked arms; it has a different conformation from HJ DNA in complex with RuvA. In the full resolvosome a probable DNA-RuvA(4)-RuvB(12)-RuvC(2) complex forms which resolves the HJ. Mg(2+) serves as cofactor.

The protein localises to the cytoplasm. It catalyses the reaction Endonucleolytic cleavage at a junction such as a reciprocal single-stranded crossover between two homologous DNA duplexes (Holliday junction).. Functionally, the RuvA-RuvB-RuvC complex processes Holliday junction (HJ) DNA during genetic recombination and DNA repair. Endonuclease that resolves HJ intermediates. Cleaves cruciform DNA by making single-stranded nicks across the HJ at symmetrical positions within the homologous arms, yielding a 5'-phosphate and a 3'-hydroxyl group; requires a central core of homology in the junction. The consensus cleavage sequence is 5'-(A/T)TT(C/G)-3'. Cleavage occurs on the 3'-side of the TT dinucleotide at the point of strand exchange. HJ branch migration catalyzed by RuvA-RuvB allows RuvC to scan DNA until it finds its consensus sequence, where it cleaves and resolves the cruciform DNA. The protein is Crossover junction endodeoxyribonuclease RuvC of Synechococcus sp. (strain CC9311).